The chain runs to 300 residues: Ribosomal protein L11 methyltransferase (300 aa).

4 residues coordinate S-adenosyl-L-methionine: Thr-152, Gly-173, Asp-195, and Asn-234.

It belongs to the methyltransferase superfamily. PrmA family.

Its subcellular location is the cytoplasm. The enzyme catalyses L-lysyl-[protein] + 3 S-adenosyl-L-methionine = N(6),N(6),N(6)-trimethyl-L-lysyl-[protein] + 3 S-adenosyl-L-homocysteine + 3 H(+). In terms of biological role, methylates ribosomal protein L11. The chain is Ribosomal protein L11 methyltransferase from Burkholderia mallei (strain NCTC 10247).